A 329-amino-acid chain; its full sequence is Malate dehydrogenase (329 aa).

12–18 contacts NAD(+); that stretch reads GAAGQIG. Arginine 93 and arginine 99 together coordinate substrate. Residues asparagine 106, glutamine 113, and 130–132 each bind NAD(+); that span reads TGN. Positions 132 and 163 each coordinate substrate. The active-site Proton acceptor is the histidine 188.

Belongs to the LDH/MDH superfamily. MDH type 2 family.

It carries out the reaction (S)-malate + NAD(+) = oxaloacetate + NADH + H(+). Functionally, catalyzes the reversible oxidation of malate to oxaloacetate. This is Malate dehydrogenase from Mycobacterium avium (strain 104).